Consider the following 220-residue polypeptide: Putative DNA repair glycosylase MJ1434 (220 aa).

[4Fe-4S] cluster-binding residues include C202, C208, C211, and C217.

It belongs to the Nth/MutY family. [4Fe-4S] cluster serves as cofactor.

The chain is Putative DNA repair glycosylase MJ1434 from Methanocaldococcus jannaschii (strain ATCC 43067 / DSM 2661 / JAL-1 / JCM 10045 / NBRC 100440) (Methanococcus jannaschii).